The following is a 492-amino-acid chain: Cysteine--tRNA ligase (492 aa).

C35 contacts Zn(2+). The 'HIGH' region signature appears at 37-47 (PTVYSNVHLGN). Zn(2+)-binding residues include C230, H255, and E259. Positions 287-291 (KMAKS) match the 'KMSKS' region motif. K290 serves as a coordination point for ATP.

Belongs to the class-I aminoacyl-tRNA synthetase family. In terms of assembly, monomer. It depends on Zn(2+) as a cofactor.

It is found in the cytoplasm. It catalyses the reaction tRNA(Cys) + L-cysteine + ATP = L-cysteinyl-tRNA(Cys) + AMP + diphosphate. The polypeptide is Cysteine--tRNA ligase (Flavobacterium johnsoniae (strain ATCC 17061 / DSM 2064 / JCM 8514 / BCRC 14874 / CCUG 350202 / NBRC 14942 / NCIMB 11054 / UW101) (Cytophaga johnsonae)).